The primary structure comprises 478 residues: Sodium-coupled neutral amino acid transporter 5 (478 aa).

The interval 1 to 20 (MAISSAEGMELQDPKMNGAL) is disordered. Over 1–57 (MAISSAEGMELQDPKMNGALPGNAVEQEHEGFLPSHSPSPGRKPAQFMDFEGKTSFG) the chain is Cytoplasmic. The chain crosses the membrane as a helical span at residues 58-80 (MSVFNLSNAIMGSGILGLAYAMA). Residues 81-93 (HTGILLFLALLLC) are Extracellular-facing. Residues 94–114 (IALLSSYSIHLLLTCAGVVGI) traverse the membrane as a helical segment. The Cytoplasmic portion of the chain corresponds to 115–131 (RAYEQLGQRALGPAGKV). A helical membrane pass occupies residues 132–152 (VVAAVICLHNVGAMSSYLFII). Topologically, residues 153-172 (KSELPLVIATFLDMDPEGDW) are extracellular. Residues 173–193 (FLKGNLLIIIVSVLIILPLAL) form a helical membrane-spanning segment. Topologically, residues 194–198 (MRHLG) are cytoplasmic. A helical transmembrane segment spans residues 199–219 (YLGYTSGLSLTCMLFFLISVI). Residues 220-263 (YKKFQLGCTVGHNGTAVESKSSPSLPIHGLNTSCEAQMFTADSQ) lie on the Extracellular side of the membrane. An intrachain disulfide couples Cys-227 to Cys-253. Asn-232 carries an N-linked (GlcNAc...) asparagine glycan. Residues 264–284 (MFYTVPIMAFAFVCHPEVLPI) traverse the membrane as a helical segment. Residues 285-301 (YTELCRPSKRRMQAVAN) are Cytoplasmic-facing. The helical transmembrane segment at 302–322 (VSIGAMFCMYGLTATFGYLTF) threads the bilayer. At 323-340 (YSSVEAEMLHMYSQHDLL) the chain is on the extracellular side. The helical transmembrane segment at 341–361 (ILCVRLAVLLAVTLTVPVVLF) threads the bilayer. Residues 362–382 (PIRRALQQLLFPSKAFSWPRH) lie on the Cytoplasmic side of the membrane. A helical transmembrane segment spans residues 383-403 (VAIALILLVLVNVLVICVPTI). Over 404 to 405 (RD) the chain is Extracellular. Residues 406–426 (IFGVIGSTSAPSLIFILPSIF) traverse the membrane as a helical segment. The Cytoplasmic portion of the chain corresponds to 427-445 (YLRIVPSEVEPLYSWPKIQ). A helical transmembrane segment spans residues 446–466 (ALCFGVLGVLFMAISLGFMFA). Residues 467–478 (NWATGQSHVSGH) are Extracellular-facing.

It belongs to the amino acid/polyamine transporter 2 family.

It is found in the cell membrane. It catalyses the reaction L-serine(out) + Na(+)(out) + H(+)(in) = L-serine(in) + Na(+)(in) + H(+)(out). It carries out the reaction L-alanine(out) + Na(+)(out) + H(+)(in) = L-alanine(in) + Na(+)(in) + H(+)(out). The enzyme catalyses glycine(out) + Na(+)(out) + H(+)(in) = glycine(in) + Na(+)(in) + H(+)(out). The catalysed reaction is L-glutamine(out) + Na(+)(out) + H(+)(in) = L-glutamine(in) + Na(+)(in) + H(+)(out). It catalyses the reaction L-asparagine(out) + Na(+)(out) + H(+)(in) = L-asparagine(in) + Na(+)(in) + H(+)(out). It carries out the reaction L-histidine(out) + Na(+)(out) + H(+)(in) = L-histidine(in) + Na(+)(in) + H(+)(out). The enzyme catalyses L-cysteine(out) + Na(+)(out) + H(+)(in) = L-cysteine(in) + Na(+)(in) + H(+)(out). Its activity is regulated as follows. Not inhibited by lithium. Partial allosteric regulation on ions sodium binding. Its function is as follows. Symporter that cotransports neutral amino acids and sodium ions, coupled to an H(+) antiporter activity. Releases L-glutamine and glycine from astroglial cells and may participate in the glutamate/GABA-glutamine cycle and the NMDA receptors activation. In addition contributes significantly to L-glutamine uptake in retina, namely in ganglion and Mueller cells and, therefore participates in the retinal glutamate-glutamine cycle. The transport activity is pH sensitive, Li(+) tolerant, bidirectional and associated with large uncoupled fluxes of protons. The transport is electroneutral coupled to the cotransport of 1 Na(+) and the antiport of 1 H(+). May have particular importance for modulation of net hepatic glutamine flux. In Bos taurus (Bovine), this protein is Sodium-coupled neutral amino acid transporter 5.